Consider the following 191-residue polypeptide: MAQLFFRYGSMNSGKTIEILKVAHNYEEQNKTVAIFTSGIDDRDQVGFISSRIGLKREATPIFSDTNIFEIVANIKPKPNCVLLDESQFLEKEHVFQLAKIVDELNIPVIAYGLKNDFRNELFEGSKYLLLYADKLEEMKTICWFCAKKATMVLRVDDKGKPVYTGEQIMIGGNDHYYPVCRKCHANPPIK.

ATP contacts are provided by residues 9–16 (GSMNSGKT) and 85–88 (DESQ). E86 (proton acceptor) is an active-site residue. Zn(2+)-binding residues include C143, C146, C181, and C184.

Belongs to the thymidine kinase family. In terms of assembly, homotetramer.

It is found in the cytoplasm. It catalyses the reaction thymidine + ATP = dTMP + ADP + H(+). This is Thymidine kinase from Listeria monocytogenes serotype 4b (strain F2365).